Here is a 332-residue protein sequence, read N- to C-terminus: T-cell leukemia homeobox protein 1 (332 aa).

Positions 203-262 (KKKPRTSFTRLQICELEKRFHRQKYLASAERAALAKALKMTDAQVKTWFQNRRTKWRRQT) form a DNA-binding region, homeobox. Lys-238 carries the post-translational modification N6-acetyllysine.

Expressed in various embryonic tissues, including branchial arches, some component of the nervous system and spleen.

It localises to the nucleus. In terms of biological role, controls the genesis of the spleen. Binds to the DNA sequence 5'-GGCGGTAAGTGG-3'. The protein is T-cell leukemia homeobox protein 1 (Tlx1) of Mus musculus (Mouse).